Reading from the N-terminus, the 453-residue chain is tRNA-2-methylthio-N(6)-dimethylallyladenosine synthase (453 aa).

The MTTase N-terminal domain maps to 4–118 (KKFYIENYGC…IPNLINNFFK (115 aa)). The [4Fe-4S] cluster site is built by cysteine 13, cysteine 49, cysteine 83, cysteine 156, cysteine 160, and cysteine 163. In terms of domain architecture, Radical SAM core spans 142-388 (EEKKITAFVT…NLQKTHSYYR (247 aa)). Positions 390-453 (RKYIGSIQDI…SATLVGDIYV (64 aa)) constitute a TRAM domain.

This sequence belongs to the methylthiotransferase family. MiaB subfamily. Monomer. [4Fe-4S] cluster serves as cofactor.

The protein localises to the cytoplasm. The enzyme catalyses N(6)-dimethylallyladenosine(37) in tRNA + (sulfur carrier)-SH + AH2 + 2 S-adenosyl-L-methionine = 2-methylsulfanyl-N(6)-dimethylallyladenosine(37) in tRNA + (sulfur carrier)-H + 5'-deoxyadenosine + L-methionine + A + S-adenosyl-L-homocysteine + 2 H(+). Its function is as follows. Catalyzes the methylthiolation of N6-(dimethylallyl)adenosine (i(6)A), leading to the formation of 2-methylthio-N6-(dimethylallyl)adenosine (ms(2)i(6)A) at position 37 in tRNAs that read codons beginning with uridine. The chain is tRNA-2-methylthio-N(6)-dimethylallyladenosine synthase from Karelsulcia muelleri (strain GWSS) (Sulcia muelleri).